The primary structure comprises 473 residues: MWTGLGPAVTLALVLVVAWATELKPTAPPIFTGRPFVVAWDVPTQDCGPRHKMPLDPKDMKAFDVQASPNEGFVNQNITIFYRDRLGMYPHFNSVGRSVHGGVPQNGSLWVHLEMLKGHVEHYIRTQEPAGLAVIDWEDWRPVWVRNWQDKDVYRRLSRHLVAIRHPDWPPERVAKEAQYEFEFAARQFMLETLRFVKAFRPRHLWGFYLFPDCYNHDYVQNWETYTGRCPDVEVSRNDQLAWLWAESTALFPSVYLEETLASSTHGRNFVSFRVQEALRVADVHHANHALPVYVFTRPTYSRGLTGLSEMDLISTIGESAALGAAGVILWGDAGFTTSNETCRRLKDYLTRSLVPYVVNVSWAAQYCSWAQCHGHGRCVRRDPNAHTFLHLSASSFRLVPSHAPDEPRLRPEGELSWADRNHLQMHFRCQCYLGWGGEQCQWDRRRAAGGASGAWAGSHLTGLLAVAVLAFT.

Positions Met-1–Ala-20 are cleaved as a signal peptide. 2 disulfide bridges follow: Cys-47–Cys-343 and Cys-214–Cys-230. Asn-77 and Asn-106 each carry an N-linked (GlcNAc...) asparagine glycan. Residue Glu-138 is the Proton donor of the active site. Asn-340 and Asn-360 each carry an N-linked (GlcNAc...) asparagine glycan. Positions Ala-364–Gln-442 constitute an EGF-like domain. Cystine bridges form between Cys-368–Cys-379, Cys-373–Cys-430, and Cys-432–Cys-441. Gly-451 carries GPI-anchor amidated glycine lipidation. Residues Ala-452–Thr-473 constitute a propeptide, removed in mature form.

This sequence belongs to the glycosyl hydrolase 56 family. In terms of assembly, interacts with MST1R.

It is found in the cell membrane. The catalysed reaction is Random hydrolysis of (1-&gt;4)-linkages between N-acetyl-beta-D-glucosamine and D-glucuronate residues in hyaluronate.. In terms of biological role, catalyzes hyaluronan degradation into small fragments that are endocytosed and degraded in lysosomes by HYAL1 and exoglycosidases. Essential for the breakdown of extracellular matrix hyaluronan. In Bos taurus (Bovine), this protein is Hyaluronidase-2 (HYAL2).